A 21-amino-acid chain; its full sequence is NVCHGSDSVESANKEIDLWFK.

The Pros-phosphohistidine intermediate role is filled by His4.

The protein belongs to the NDK family. As to quaternary structure, homohexamer. The cofactor is Mg(2+).

Its subcellular location is the cytoplasm. The catalysed reaction is a 2'-deoxyribonucleoside 5'-diphosphate + ATP = a 2'-deoxyribonucleoside 5'-triphosphate + ADP. The enzyme catalyses a ribonucleoside 5'-diphosphate + ATP = a ribonucleoside 5'-triphosphate + ADP. Functionally, major role in the synthesis of nucleoside triphosphates other than ATP. The ATP gamma phosphate is transferred to the NDP beta phosphate via a ping-pong mechanism, using a phosphorylated active-site intermediate. This Candida albicans (Yeast) protein is Nucleoside diphosphate kinase (NDK1).